Reading from the N-terminus, the 978-residue chain is Sensor histidine kinase TodS (978 aa).

A PAS 1 domain is found at 32–103; the sequence is CEEHARIIFD…TQKRLVETAS (72 aa). Residues 108 to 162 form the PAC 1 domain; the sequence is VRCDVEILGKSGGREVIAVDFSLLPICNEEGSIVYLLAEGRNITDKKKAEAMLAL. Residues 187–405 enclose the Histidine kinase 1 domain; sequence KVSHELRTPL…LFQVKLPLNA (219 aa). His190 carries the post-translational modification Phosphohistidine; by autocatalysis. The region spanning 452–567 is the Response regulatory domain; it reads RVLIVEDNPD…ELRARVSNLV (116 aa). Asp500 bears the 4-aspartylphosphate mark. One can recognise a PAS 2 domain in the interval 611-681; it reads SEARWKAVYE…QRLANLLQGG (71 aa). The region spanning 685–737 is the PAC 2 domain; that stretch reads YSVERSYLCKNGSTIWANASVSLMPQRVGESPVILQIIDDITEKKQAQENLNQ. The region spanning 757–974 is the Histidine kinase 2 domain; that stretch reads YIAHEINQPL…CFLVSIPARQ (218 aa). Phosphohistidine is present on His760.

In terms of processing, autophosphorylated. Activation requires a sequential transfer of a phosphate group from a His in the primary transmitter domain, to an Asp in the receiver domain and to a His in the secondary transmitter domain.

Its subcellular location is the cytoplasm. It carries out the reaction ATP + protein L-histidine = ADP + protein N-phospho-L-histidine.. Activity is regulated by agonists and antagonists. Binding of agonists such as toluene or benzene to TodS stimulates autophosphorylation at His-190. Activity is inhibited by antagonists such as o-xylene, o-chlorotoluene and trimethylbenzene isomers, which bind to TodS but do not stimulate autophosphorylation. Agonists and antagonists bind to the same PAS domain. Member of the two-component regulatory system TodS/TodT involved in the regulation of toluene degradation. Phosphorylates TodT via a four-step phosphorelay in response to toluene. Can also be induced by benzene and ethylbenzene. In Pseudomonas putida (strain DOT-T1E), this protein is Sensor histidine kinase TodS (todS).